A 258-amino-acid polypeptide reads, in one-letter code: D-beta-hydroxybutyrate dehydrogenase (258 aa).

8-32 (LVTGSTSGIGLGIAKALAAQGANII) serves as a coordination point for NAD(+). S140 serves as a coordination point for substrate. Y153 acts as the Proton acceptor in catalysis.

Belongs to the short-chain dehydrogenases/reductases (SDR) family.

It catalyses the reaction (R)-3-hydroxybutanoate + NAD(+) = acetoacetate + NADH + H(+). The protein is D-beta-hydroxybutyrate dehydrogenase (hbdH1) of Cupriavidus necator (strain ATCC 17699 / DSM 428 / KCTC 22496 / NCIMB 10442 / H16 / Stanier 337) (Ralstonia eutropha).